A 39-amino-acid polypeptide reads, in one-letter code: Gas vesicle protein C (39 aa).

Belongs to the gas vesicle GvpC family.

The protein resides in the gas vesicle. Its function is as follows. Confers stability, involved in shaping gas vesicles, hollow, gas filled proteinaceous nanostructures. During planktonic growth they allow positioning of the organism at a favorable depth for light or nutrient acquisition. The chain is Gas vesicle protein C from Spirulina sp. (strain CCAP 1475/10).